The primary structure comprises 461 residues: D-phenylhydantoinase (461 aa).

A divalent metal cation is bound by residues histidine 59, histidine 61, and lysine 151. Position 151 is an N6-carboxylysine (lysine 151). Residue tyrosine 156 participates in substrate binding. Positions 182 and 239 each coordinate a divalent metal cation. Position 286 (serine 286) interacts with substrate. A divalent metal cation is bound at residue aspartate 313. Asparagine 335 contributes to the substrate binding site.

Belongs to the metallo-dependent hydrolases superfamily. Hydantoinase/dihydropyrimidinase family. Homotetramer. The cofactor is Zn(2+). It depends on Ni(2+) as a cofactor. Requires Co(2+) as cofactor. Mn(2+) is required as a cofactor. In terms of processing, carboxylation allows a single lysine to coordinate two divalent metal cations.

It catalyses the reaction D-5-phenylhydantoin + H2O = N-carbamoyl-D-phenylglycine + H(+). Catalyzes the stereospecific hydrolysis of the cyclic amide bond of D-hydantoin derivatives with an aromatic side chains at the 5'-position. Has no activity on dihydropyrimidines. The physiological function is unknown. The protein is D-phenylhydantoinase (hyuA) of Escherichia coli (strain K12).